We begin with the raw amino-acid sequence, 138 residues long: Putative pre-16S rRNA nuclease (138 aa).

The protein belongs to the YqgF nuclease family.

It localises to the cytoplasm. In terms of biological role, could be a nuclease involved in processing of the 5'-end of pre-16S rRNA. This chain is Putative pre-16S rRNA nuclease (yrrK), found in Bacillus subtilis (strain 168).